Consider the following 164-residue polypeptide: Ribosome-binding factor A (164 aa).

Positions 123-164 (ARDLGVPPSGEDDGDDEADDEDDDGGEEGPGAAAPPPADEGR) are disordered. Positions 132–149 (GEDDGDDEADDEDDDGGE) are enriched in acidic residues. The segment covering 155–164 (AAPPPADEGR) has biased composition (pro residues).

This sequence belongs to the RbfA family. In terms of assembly, monomer. Binds 30S ribosomal subunits, but not 50S ribosomal subunits or 70S ribosomes.

Its subcellular location is the cytoplasm. One of several proteins that assist in the late maturation steps of the functional core of the 30S ribosomal subunit. Associates with free 30S ribosomal subunits (but not with 30S subunits that are part of 70S ribosomes or polysomes). Required for efficient processing of 16S rRNA. May interact with the 5'-terminal helix region of 16S rRNA. The protein is Ribosome-binding factor A of Rhodospirillum rubrum (strain ATCC 11170 / ATH 1.1.1 / DSM 467 / LMG 4362 / NCIMB 8255 / S1).